A 122-amino-acid chain; its full sequence is Large ribosomal subunit protein uL14 (122 aa).

The protein belongs to the universal ribosomal protein uL14 family. Part of the 50S ribosomal subunit. Forms a cluster with proteins L3 and L19. In the 70S ribosome, L14 and L19 interact and together make contacts with the 16S rRNA in bridges B5 and B8.

Functionally, binds to 23S rRNA. Forms part of two intersubunit bridges in the 70S ribosome. This chain is Large ribosomal subunit protein uL14, found in Paramagnetospirillum magneticum (strain ATCC 700264 / AMB-1) (Magnetospirillum magneticum).